A 157-amino-acid chain; its full sequence is MAKVESFTLDHTAVKAPYVRLITTEHGAKGDVISNYDLRLVQPNTAAIDTAGLHTIEHLLASLLRDRMDGVIDCSPFGCRTGFHLITWGEHSTTEVAKALKSSLEAIANDITWDDVPGVDIKSCGNYKDHSLFSAKEWAKLILSRGISNDPYTRQVV.

Residues His54, His58, and Cys124 each coordinate Fe cation.

The protein belongs to the LuxS family. In terms of assembly, homodimer. The cofactor is Fe cation.

It carries out the reaction S-(5-deoxy-D-ribos-5-yl)-L-homocysteine = (S)-4,5-dihydroxypentane-2,3-dione + L-homocysteine. Involved in the synthesis of autoinducer 2 (AI-2) which is secreted by bacteria and is used to communicate both the cell density and the metabolic potential of the environment. The regulation of gene expression in response to changes in cell density is called quorum sensing. Catalyzes the transformation of S-ribosylhomocysteine (RHC) to homocysteine (HC) and 4,5-dihydroxy-2,3-pentadione (DPD). This is S-ribosylhomocysteine lyase from Lacticaseibacillus paracasei (strain ATCC 334 / BCRC 17002 / CCUG 31169 / CIP 107868 / KCTC 3260 / NRRL B-441) (Lactobacillus paracasei).